Reading from the N-terminus, the 100-residue chain is Replication restart protein PriB (100 aa).

An SSB domain is found at 1–100 (MTNRIELSGV…VLHADKISQI (100 aa)).

This sequence belongs to the PriB family. In terms of assembly, homodimer. Interacts with PriA and DnaT. Component of the replication restart primosome. Primosome assembly occurs via a 'hand-off' mechanism. PriA binds to replication forks, subsequently PriB then DnaT bind; DnaT then displaces ssDNA to generate the helicase loading substrate.

Its function is as follows. Involved in the restart of stalled replication forks, which reloads the replicative helicase on sites other than the origin of replication; the PriA-PriB pathway is the major replication restart pathway. During primosome assembly it facilitates complex formation between PriA and DnaT on DNA; stabilizes PriA on DNA. Stimulates the DNA unwinding activity of PriA helicase. In Vibrio cholerae serotype O1 (strain ATCC 39315 / El Tor Inaba N16961), this protein is Replication restart protein PriB.